The following is a 1268-amino-acid chain: Protein transport protein Sec24B (1268 aa).

Low complexity-rich tracts occupy residues 1–14 (MSAPAGSSHPAASA) and 21–48 (GGAAVSGAAAPAGPGAGPAPHQQNGPAQ). Disordered stretches follow at residues 1–71 (MSAP…SGHY), 216–263 (APTV…LTWS), 303–345 (QNVQ…SVTQ), and 362–451 (NNQA…VVPQ). Ser-2 carries the post-translational modification N-acetylserine. A Phosphoserine modification is found at Ser-55. Residues 225-234 (NSFSGQNTAI) are compositionally biased toward polar residues. 3 stretches are compositionally biased toward low complexity: residues 245-255 (SQQHHQQQSLS), 311-332 (SPVVSTVLSGSSGSSSTRTPPT), and 365-375 (ASSAPTPLSST). Thr-329 bears the Phosphothreonine mark. Positions 376 to 389 (SDDEEEEEEDEEAG) are enriched in acidic residues. Residues 426–450 (APDPAPEPDPASAPAPASAPAPVVP) are compositionally biased toward pro residues. Zn(2+)-binding residues include Cys-605, Cys-608, Cys-626, and Cys-629. Residues 605 to 629 (CRSCRTYINPFVSFIDQRRWKCNLC) form a zinc finger-like region. A Gelsolin-like repeat occupies 1141–1213 (PQPPLQKLSA…TLSSERARSF (73 aa)). Position 1224 is a phosphoserine (Ser-1224).

This sequence belongs to the SEC23/SEC24 family. SEC24 subfamily. As to quaternary structure, COPII is composed of at least five proteins: the Sec23/24 complex, the Sec13/31 complex and SAR1. Interacts with STING1; promoting STING1 translocation to COPII vesicles in a STEEP1-dependent manner. Interacts with RNF139. Interacts with TMED2 and TMED10. Interacts with CNIH4.

The protein localises to the cytoplasmic vesicle. Its subcellular location is the COPII-coated vesicle membrane. It is found in the endoplasmic reticulum membrane. It localises to the cytoplasm. The protein resides in the cytosol. Its function is as follows. Component of the coat protein complex II (COPII) which promotes the formation of transport vesicles from the endoplasmic reticulum (ER). The coat has two main functions, the physical deformation of the endoplasmic reticulum membrane into vesicles and the selection of cargo molecules for their transport to the Golgi complex. Plays a central role in cargo selection within the COPII complex and together with SEC24A may have a different specificity compared to SEC24C and SEC24D. May package preferentially cargos with cytoplasmic DxE or LxxLE motifs and may also recognize conformational epitopes. In Homo sapiens (Human), this protein is Protein transport protein Sec24B.